The chain runs to 241 residues: Terpene cyclase terB (241 aa).

The next 5 membrane-spanning stretches (helical) occupy residues 19 to 39 (LADT…GAMI), 48 to 68 (YCMG…YTLV), 75 to 95 (VELA…FAAT), 114 to 134 (LIFL…AAEI), and 137 to 157 (ALAY…GGVC). The N-linked (GlcNAc...) asparagine glycan is linked to Asn-163. 2 helical membrane-spanning segments follow: residues 169 to 189 (SVTL…FAFL) and 198 to 218 (FAWL…LADI).

Belongs to the paxB family.

The protein resides in the membrane. Its pathway is secondary metabolite biosynthesis. Terpene cyclase; part of the gene cluster that mediates the biosynthesis of terpendoles, indole-diterpene (IDT) mycotoxins including terpendole I, terpendole K, terpendole C, as well as the kinesin Eg5 inhibitor terpendole E. Terpendoles biosynthesis begins with the synthesis of geranylgeranyl diphosphate (GGPP) by a yet unidentified GGPP synthase. Condensation of indole-3-glycerol phosphate with GGPP by the prenyltransferase terC then forms 3-geranylgeranylindole (3-GGI), followed by epoxidation and cyclization of this intermediate (by the FAD-dependent monooxygeanse terM and the terpene cyclase terB) to form paspaline. The cytochrome monooxygenase terQ then hydroxylates paspalline at C-11 to yield terpendole E. The cytochrome monooxygenase terP converts terpendole E to 13-desoxyterpendole I, and terQ converts 13-desoxyterpendole I into terpendole I. TerF and terK are required for conversion of terpendole I to terpendole C which is further converted to terpendole K. The chain is Terpene cyclase terB from Tolypocladium album (Soil fungus).